The sequence spans 131 residues: Lysozyme C (131 aa).

The C-type lysozyme domain occupies 2–131 (KIYEQCELAR…VSQWIKGCKL (130 aa)). 4 disulfides stabilise this stretch: cysteine 7-cysteine 129, cysteine 31-cysteine 117, cysteine 66-cysteine 82, and cysteine 78-cysteine 96. Catalysis depends on residues glutamate 36 and aspartate 54.

This sequence belongs to the glycosyl hydrolase 22 family. In terms of assembly, monomer.

The protein resides in the secreted. It catalyses the reaction Hydrolysis of (1-&gt;4)-beta-linkages between N-acetylmuramic acid and N-acetyl-D-glucosamine residues in a peptidoglycan and between N-acetyl-D-glucosamine residues in chitodextrins.. Functionally, lysozymes have primarily a bacteriolytic function; those in tissues and body fluids are associated with the monocyte-macrophage system and enhance the activity of immunoagents. Has strong bacteriolytic activity against M.luteus and V.cholerae, weak bacteriolytic activity against P.aeruginosa and no activity against A.hydrophila. This Pelodiscus sinensis (Chinese softshell turtle) protein is Lysozyme C (LYZ).